Consider the following 454-residue polypeptide: Bifunctional protein GlmU (454 aa).

The segment at Met-1–Arg-228 is pyrophosphorylase. UDP-N-acetyl-alpha-D-glucosamine is bound by residues Leu-9–Gly-12, Lys-23, Gln-74, Gly-79–Thr-80, Tyr-101–Asp-103, Gly-138, Glu-153, Asn-168, and Asn-226. Asp-103 contacts Mg(2+). Asn-226 lines the Mg(2+) pocket. The interval Leu-229–Glu-249 is linker. Residues Gly-250 to Ala-454 form an N-acetyltransferase region. Positions 332 and 350 each coordinate UDP-N-acetyl-alpha-D-glucosamine. Catalysis depends on His-362, which acts as the Proton acceptor. Positions 365 and 376 each coordinate UDP-N-acetyl-alpha-D-glucosamine. Acetyl-CoA is bound by residues Ala-379, Asn-385 to Tyr-386, Ser-404, Ala-422, and Arg-439.

The protein in the N-terminal section; belongs to the N-acetylglucosamine-1-phosphate uridyltransferase family. It in the C-terminal section; belongs to the transferase hexapeptide repeat family. Homotrimer. It depends on Mg(2+) as a cofactor.

The protein resides in the cytoplasm. The catalysed reaction is alpha-D-glucosamine 1-phosphate + acetyl-CoA = N-acetyl-alpha-D-glucosamine 1-phosphate + CoA + H(+). The enzyme catalyses N-acetyl-alpha-D-glucosamine 1-phosphate + UTP + H(+) = UDP-N-acetyl-alpha-D-glucosamine + diphosphate. It participates in nucleotide-sugar biosynthesis; UDP-N-acetyl-alpha-D-glucosamine biosynthesis; N-acetyl-alpha-D-glucosamine 1-phosphate from alpha-D-glucosamine 6-phosphate (route II): step 2/2. The protein operates within nucleotide-sugar biosynthesis; UDP-N-acetyl-alpha-D-glucosamine biosynthesis; UDP-N-acetyl-alpha-D-glucosamine from N-acetyl-alpha-D-glucosamine 1-phosphate: step 1/1. Its pathway is bacterial outer membrane biogenesis; LPS lipid A biosynthesis. Functionally, catalyzes the last two sequential reactions in the de novo biosynthetic pathway for UDP-N-acetylglucosamine (UDP-GlcNAc). The C-terminal domain catalyzes the transfer of acetyl group from acetyl coenzyme A to glucosamine-1-phosphate (GlcN-1-P) to produce N-acetylglucosamine-1-phosphate (GlcNAc-1-P), which is converted into UDP-GlcNAc by the transfer of uridine 5-monophosphate (from uridine 5-triphosphate), a reaction catalyzed by the N-terminal domain. The chain is Bifunctional protein GlmU from Marinobacter nauticus (strain ATCC 700491 / DSM 11845 / VT8) (Marinobacter aquaeolei).